Here is a 501-residue protein sequence, read N- to C-terminus: Lysine--tRNA ligase (501 aa).

Glutamate 411 and glutamate 418 together coordinate Mg(2+).

It belongs to the class-II aminoacyl-tRNA synthetase family. In terms of assembly, homodimer. Requires Mg(2+) as cofactor.

It is found in the cytoplasm. The catalysed reaction is tRNA(Lys) + L-lysine + ATP = L-lysyl-tRNA(Lys) + AMP + diphosphate. This Clostridium perfringens (strain 13 / Type A) protein is Lysine--tRNA ligase.